Here is a 75-residue protein sequence, read N- to C-terminus: Small ribosomal subunit protein bS18 (75 aa).

It belongs to the bacterial ribosomal protein bS18 family. In terms of assembly, part of the 30S ribosomal subunit. Forms a tight heterodimer with protein bS6.

Functionally, binds as a heterodimer with protein bS6 to the central domain of the 16S rRNA, where it helps stabilize the platform of the 30S subunit. The chain is Small ribosomal subunit protein bS18 from Clostridioides difficile (strain 630) (Peptoclostridium difficile).